The following is a 318-amino-acid chain: Malonyl CoA-acyl carrier protein transacylase, mitochondrial (318 aa).

This sequence belongs to the FabD family.

Its subcellular location is the mitochondrion. The enzyme catalyses holo-[ACP] + malonyl-CoA = malonyl-[ACP] + CoA. It participates in lipid metabolism; fatty acid biosynthesis. In terms of biological role, involved in biosynthesis of fatty acids in mitochondria. This Schizosaccharomyces pombe (strain 972 / ATCC 24843) (Fission yeast) protein is Malonyl CoA-acyl carrier protein transacylase, mitochondrial (mct1).